We begin with the raw amino-acid sequence, 700 residues long: MANLPILQFEEKIVETVEKNSVVVIIGETGSGKSTQLSQILHRHGYTKSGVIAITQPRRVAAVSVARRVAQELDVPLGEDVGYAIRFEDRTTSKTRIKYLTDGVLLRESLSNPMLDDYSVIILDEAHERSLNTDILLGLVKRLVRIRASNFKVLITSATLDGEKVSEFFSGCPVLNVPGKLYPVEILYSKERPVSYIESSLKVAIDIHVREPEGDILIFMTGQDDIEKLVSRLEEKVRSLAEGSCMDAIIYPLHGSLPPEMQVRVFSPPPPNCRRFIVSTNIAETSLTVDGVVYVIDSGYVKQRQYNPSSGMFSLDVIQISKVQANQRAGRAGRTRPGKCYRLYPLAVYRDDFLDATIPEIQRTSLAGSVLYLKSLDLPDIDILKFDFLDAPSSESLEDALKQLYFIDAIDENGAITRIGRTMSDLPLEPSLSRTLIEANETGCLSQALTVVAMLSAETTLLPARSKPSEKKRKHDEDSNLPNGSGYGDHIQLLQIFESWDRTNYDPVWCKENGMQVRGMVFVKDVRRQLCQIMQKISKDRLEVGADGRKSSSRDDYRKLRKALCVGNANQIAERMLRHNGYRTLSFQSQLVQVHPSSVLSADNDGMMPNYVVYHELISTTRPFMRNVCAVDMAWVAPIKRKIEKLNVRKLSGGPAPSFKVPEEKTELSKNNAETPAVSENVESRIEAARERFLARKGQK.

N-acetylalanine is present on Ala-2. In terms of domain architecture, Helicase ATP-binding spans 14-178; it reads VETVEKNSVV…FSGCPVLNVP (165 aa). 27-34 contacts ATP; that stretch reads GETGSGKS. The DEAH box signature appears at 124-127; it reads DEAH. Residues 200 to 377 enclose the Helicase C-terminal domain; it reads SLKVAIDIHV…GSVLYLKSLD (178 aa). Disordered regions lie at residues 463 to 486 and 654 to 682; these read PARS…NGSG and GPAP…SENV.

This sequence belongs to the DEAD box helicase family. DEAH subfamily. PRP22 sub-subfamily.

The enzyme catalyses ATP + H2O = ADP + phosphate + H(+). May be involved in pre-mRNA splicing. The chain is Probable pre-mRNA-splicing factor ATP-dependent RNA helicase DEAH4 from Arabidopsis thaliana (Mouse-ear cress).